Here is a 122-residue protein sequence, read N- to C-terminus: MIQQQTYLNVADNSGARKLMCLRVLSTGNCRYGGIGDQIIAVVKEAIPNMGVKKSDVVRAVIVRTRQPLRRASGMSIRFDDNAAVIINAEGNPKGTRVFGPVARELRDKNFTKIVSLAPEVI.

This sequence belongs to the universal ribosomal protein uL14 family. In terms of assembly, part of the 50S ribosomal subunit. Forms a cluster with proteins L3 and L19. In the 70S ribosome, L14 and L19 interact and together make contacts with the 16S rRNA in bridges B5 and B8.

In terms of biological role, binds to 23S rRNA. Forms part of two intersubunit bridges in the 70S ribosome. This Picosynechococcus sp. (strain ATCC 27264 / PCC 7002 / PR-6) (Agmenellum quadruplicatum) protein is Large ribosomal subunit protein uL14.